Here is a 508-residue protein sequence, read N- to C-terminus: Histidine ammonia-lyase (508 aa).

A cross-link (5-imidazolinone (Ala-Gly)) is located at residues 141–143 (ASG). Serine 142 bears the 2,3-didehydroalanine (Ser) mark.

This sequence belongs to the PAL/histidase family. Contains an active site 4-methylidene-imidazol-5-one (MIO), which is formed autocatalytically by cyclization and dehydration of residues Ala-Ser-Gly.

The protein localises to the cytoplasm. It catalyses the reaction L-histidine = trans-urocanate + NH4(+). It functions in the pathway amino-acid degradation; L-histidine degradation into L-glutamate; N-formimidoyl-L-glutamate from L-histidine: step 1/3. This Bacillus subtilis (strain 168) protein is Histidine ammonia-lyase (hutH).